Consider the following 523-residue polypeptide: 2-isopropylmalate synthase (523 aa).

Residues 5 to 267 form the Pyruvate carboxyltransferase domain; it reads VIIFDTTLRD…HTNINHHEIW (263 aa). Residues aspartate 14, histidine 202, histidine 204, and asparagine 238 each contribute to the Mn(2+) site. A regulatory domain region spans residues 392 to 523; the sequence is RLDYFSVQSG…QNKENNKETV (132 aa).

It belongs to the alpha-IPM synthase/homocitrate synthase family. LeuA type 1 subfamily. Homodimer. The cofactor is Mn(2+).

It is found in the cytoplasm. The catalysed reaction is 3-methyl-2-oxobutanoate + acetyl-CoA + H2O = (2S)-2-isopropylmalate + CoA + H(+). It participates in amino-acid biosynthesis; L-leucine biosynthesis; L-leucine from 3-methyl-2-oxobutanoate: step 1/4. Catalyzes the condensation of the acetyl group of acetyl-CoA with 3-methyl-2-oxobutanoate (2-ketoisovalerate) to form 3-carboxy-3-hydroxy-4-methylpentanoate (2-isopropylmalate). This chain is 2-isopropylmalate synthase, found in Salmonella typhi.